Here is an 852-residue protein sequence, read N- to C-terminus: Homeobox-leucine zipper protein ATHB-14 (852 aa).

The interval 1-25 is disordered; the sequence is MMMVHSMSRDMMNRESPDKGLDSGK. Basic and acidic residues predominate over residues 7 to 22; that stretch reads MSRDMMNRESPDKGLD. The homeobox DNA-binding region spans 22-85; sequence DSGKYVRYTP…NRRCREKQRK (64 aa). Residues 80–122 are a coiled coil; it reads REKQRKEAARLQTVNRKLNAMNKLLMEENDRLQKQVSNLVYEN. The segment at 80 to 130 is ZIP domain; it reads REKQRKEAARLQTVNRKLNAMNKLLMEENDRLQKQVSNLVYENGHMKHQLH. A compositionally biased stretch (polar residues) spans 130–148; that stretch reads HTASGTTTDNSCESVVVSG. The tract at residues 130 to 166 is disordered; that stretch reads HTASGTTTDNSCESVVVSGQQHQQQNPNPQHQQRDAN. Low complexity predominate over residues 149–160; it reads QQHQQQNPNPQH. In terms of domain architecture, START spans 164–392; the sequence is DANNPAGLLS…IAQETSGEVQ (229 aa).

The protein belongs to the HD-ZIP homeobox family. Class III subfamily. In terms of assembly, homodimer. Heterodimer with ZPR3. Interacts with ESR1 and ESR2. Interacts with ZPR3. As to expression, expressed in the center of the meristem and on the adaxial side of the leaves.

Its subcellular location is the nucleus. With respect to regulation, inhibited by ZPR3. Probable transcription factor involved in the determination of adaxial-abaxial polarity in ovule primordium. Specifies adaxial leaf fates. This Arabidopsis thaliana (Mouse-ear cress) protein is Homeobox-leucine zipper protein ATHB-14 (ATHB-14).